The following is a 129-amino-acid chain: Small ribosomal subunit protein uS11 (129 aa).

This sequence belongs to the universal ribosomal protein uS11 family. In terms of assembly, part of the 30S ribosomal subunit. Interacts with proteins S7 and S18. Binds to IF-3.

In terms of biological role, located on the platform of the 30S subunit, it bridges several disparate RNA helices of the 16S rRNA. Forms part of the Shine-Dalgarno cleft in the 70S ribosome. The polypeptide is Small ribosomal subunit protein uS11 (Francisella tularensis subsp. holarctica (strain FTNF002-00 / FTA)).